The following is a 91-amino-acid chain: MANTSSAKKATRKIARRTEVNKARRSRVRTFVRQVEEAIASGDATLAKEAFLAAQPELARAATKGVLHANTASRKVSRLAKRVKALSAPTA.

The disordered stretch occupies residues 1 to 23 (MANTSSAKKATRKIARRTEVNKA).

This sequence belongs to the bacterial ribosomal protein bS20 family.

In terms of biological role, binds directly to 16S ribosomal RNA. This Rhizobium rhizogenes (strain K84 / ATCC BAA-868) (Agrobacterium radiobacter) protein is Small ribosomal subunit protein bS20.